Consider the following 99-residue polypeptide: MALTLTDVKRIAHLARLEMADADAEHTLGQLNEFFGLVEQMQAVDTAGIAPLAHPIEQIQEVAQRLRDDAVTEVVNRDDNQRPAPAVQDGLYLVPKVIE.

The protein belongs to the GatC family. As to quaternary structure, heterotrimer of A, B and C subunits.

The enzyme catalyses L-glutamyl-tRNA(Gln) + L-glutamine + ATP + H2O = L-glutaminyl-tRNA(Gln) + L-glutamate + ADP + phosphate + H(+). It catalyses the reaction L-aspartyl-tRNA(Asn) + L-glutamine + ATP + H2O = L-asparaginyl-tRNA(Asn) + L-glutamate + ADP + phosphate + 2 H(+). In terms of biological role, allows the formation of correctly charged Asn-tRNA(Asn) or Gln-tRNA(Gln) through the transamidation of misacylated Asp-tRNA(Asn) or Glu-tRNA(Gln) in organisms which lack either or both of asparaginyl-tRNA or glutaminyl-tRNA synthetases. The reaction takes place in the presence of glutamine and ATP through an activated phospho-Asp-tRNA(Asn) or phospho-Glu-tRNA(Gln). The protein is Aspartyl/glutamyl-tRNA(Asn/Gln) amidotransferase subunit C of Burkholderia vietnamiensis (strain G4 / LMG 22486) (Burkholderia cepacia (strain R1808)).